Consider the following 433-residue polypeptide: Small ribosomal subunit biogenesis GTPase RsgA 1, mitochondrial (433 aa).

The disordered stretch occupies residues 1 to 20 (MLRAKHIGKNYSSSLSPVLS). Positions 113–291 (SEILDPPVAN…LADTPGFNQP (179 aa)) constitute a CP-type G domain. 212–220 (GPSGVGKSS) serves as a coordination point for GTP. Zn(2+) contacts are provided by C317, C322, H324, and C330.

Belongs to the TRAFAC class YlqF/YawG GTPase family. RsgA subfamily. In terms of assembly, monomer. Associates with 30S ribosomal subunit, binds 16S rRNA. Zn(2+) is required as a cofactor.

It is found in the mitochondrion. Functionally, one of several proteins that assist in the late maturation steps of the functional core of the 30S ribosomal subunit. Helps release RbfA from mature subunits. May play a role in the assembly of ribosomal proteins into the subunit. Circularly permuted GTPase that catalyzes slow GTP hydrolysis, GTPase activity is stimulated by the 30S ribosomal subunit. Required for embryo development. This is Small ribosomal subunit biogenesis GTPase RsgA 1, mitochondrial from Arabidopsis thaliana (Mouse-ear cress).